The chain runs to 188 residues: FMN-dependent NADPH-azoreductase (188 aa).

This sequence belongs to the azoreductase type 2 family. In terms of assembly, homotetramer. FMN is required as a cofactor.

In terms of biological role, catalyzes the reductive cleavage of azo bond in aromatic azo compounds to the corresponding amines. Requires NADPH, but not NADH, as an electron donor for its activity. In Staphylococcus haemolyticus (strain JCSC1435), this protein is FMN-dependent NADPH-azoreductase (azo1).